Reading from the N-terminus, the 730-residue chain is Elongation factor 2 (730 aa).

One can recognise a tr-type G domain in the interval 19–229 (LMIRNIGIVA…GVSFSEVFNY (211 aa)). GTP is bound by residues 28 to 35 (AHIDHGKT), 94 to 98 (DTPGH), and 148 to 151 (NKVD). Histidine 596 carries the post-translational modification Diphthamide.

Belongs to the TRAFAC class translation factor GTPase superfamily. Classic translation factor GTPase family. EF-G/EF-2 subfamily.

It localises to the cytoplasm. Catalyzes the GTP-dependent ribosomal translocation step during translation elongation. During this step, the ribosome changes from the pre-translocational (PRE) to the post-translocational (POST) state as the newly formed A-site-bound peptidyl-tRNA and P-site-bound deacylated tRNA move to the P and E sites, respectively. Catalyzes the coordinated movement of the two tRNA molecules, the mRNA and conformational changes in the ribosome. This is Elongation factor 2 (fusA) from Methanococcoides burtonii (strain DSM 6242 / NBRC 107633 / OCM 468 / ACE-M).